The sequence spans 726 residues: MGKRAKMIAKIKELMEKYDRIRNIGICAHIDHGKTTLSDNLLAGAGMISKELAGEQLALDFDEEEAQRGITIFAANVSMVHTYEGNEYLINLIDTPGHVDFGGDVTRAMRAIDGAIVVVCAVEGVMPQTETVLRQALRERVKPVLFINKVDRLINELKLTPEELQSRFIKIINDINNLIRKMAPEEFKDKWLVRVEDGSVAFGSAYNNWAISVPFMKKSGITFKDIIKYCEEDRQDELAEKAPLHEVVLDMVIKHLPSPPEAQKYRIPHLWKGDLNSEAGKAMLNCDPNGPLAGVITKIIVDKHAGAVSVCRLFSGRIKQGDEVYMVNNQQKAKIQQVSVFMGPERIPVDSISAGNICALVGLKEASAGETICSPDKIIEPFEAITHISEPVITVAIEAKNTKDLPKLIEVLRQVAREDPTVKVEINEETGEHLLSGMGELHIEIITKLKIERDAGIPVEVGQPIVVYRETVTGQSPVVESKSPNKHNKLYFVVEPLEESVLQAYKEGRIPDVDTKRKLDDKIVQELIKAGMDPEEAKRVMCIYEGNVLINMTRGIVHLDEVKELIIQGFKEAMRNGPLAAEKCQGVKVKLMDAVLHEDAIHRGPAQMIPAARFGIRDAMMQANPVLLEPMQFVYINTPQDFMGAAMREISNRRGQILDMEQEGDMAIIKAKCPVAEMFGFAGAIRGATQGRCLWSIEFAGYEKVPRDMQEQLIKQIRERKGLKLE.

In terms of domain architecture, tr-type G spans 19-260; that stretch reads DRIRNIGICA…MVIKHLPSPP (242 aa). Residues 28 to 35, 94 to 98, and 148 to 151 contribute to the GTP site; these read AHIDHGKT, DTPGH, and NKVD. H602 is modified (diphthamide).

This sequence belongs to the TRAFAC class translation factor GTPase superfamily. Classic translation factor GTPase family. EF-G/EF-2 subfamily.

The protein resides in the cytoplasm. In terms of biological role, catalyzes the GTP-dependent ribosomal translocation step during translation elongation. During this step, the ribosome changes from the pre-translocational (PRE) to the post-translocational (POST) state as the newly formed A-site-bound peptidyl-tRNA and P-site-bound deacylated tRNA move to the P and E sites, respectively. Catalyzes the coordinated movement of the two tRNA molecules, the mRNA and conformational changes in the ribosome. The polypeptide is Elongation factor 2 (fusA) (Methanocaldococcus jannaschii (strain ATCC 43067 / DSM 2661 / JAL-1 / JCM 10045 / NBRC 100440) (Methanococcus jannaschii)).